The chain runs to 395 residues: Altered inheritance of mitochondria protein 39, mitochondrial (395 aa).

Residues 161-181 traverse the membrane as a helical segment; the sequence is IFGGIFGVIIGYSLIYKVIYL.

Belongs to the AIM39 family.

It localises to the mitochondrion membrane. The protein is Altered inheritance of mitochondria protein 39, mitochondrial (AIM39) of Saccharomyces cerevisiae (strain YJM789) (Baker's yeast).